Here is a 359-residue protein sequence, read N- to C-terminus: Peptide chain release factor 1 (359 aa).

At Gln233 the chain carries N5-methylglutamine.

The protein belongs to the prokaryotic/mitochondrial release factor family. In terms of processing, methylated by PrmC. Methylation increases the termination efficiency of RF1.

The protein resides in the cytoplasm. Functionally, peptide chain release factor 1 directs the termination of translation in response to the peptide chain termination codons UAG and UAA. The chain is Peptide chain release factor 1 from Clostridium acetobutylicum (strain ATCC 824 / DSM 792 / JCM 1419 / IAM 19013 / LMG 5710 / NBRC 13948 / NRRL B-527 / VKM B-1787 / 2291 / W).